Here is a 178-residue protein sequence, read N- to C-terminus: CDP-archaeol synthase (178 aa).

The next 5 membrane-spanning stretches (helical) occupy residues Leu7–Phe27, Phe56–Gly76, Val91–Leu111, Val125–Val145, and Ile149–Tyr169.

Belongs to the CDP-archaeol synthase family. Mg(2+) serves as cofactor.

It localises to the cell membrane. The enzyme catalyses 2,3-bis-O-(geranylgeranyl)-sn-glycerol 1-phosphate + CTP + H(+) = CDP-2,3-bis-O-(geranylgeranyl)-sn-glycerol + diphosphate. It participates in membrane lipid metabolism; glycerophospholipid metabolism. Its function is as follows. Catalyzes the formation of CDP-2,3-bis-(O-geranylgeranyl)-sn-glycerol (CDP-archaeol) from 2,3-bis-(O-geranylgeranyl)-sn-glycerol 1-phosphate (DGGGP) and CTP. This reaction is the third ether-bond-formation step in the biosynthesis of archaeal membrane lipids. The protein is CDP-archaeol synthase of Methanococcus vannielii (strain ATCC 35089 / DSM 1224 / JCM 13029 / OCM 148 / SB).